The primary structure comprises 225 residues: PKHD-type hydroxylase YbiX (225 aa).

Residues 78–177 (TLSTPLFNRY…RVASFMWIQS (100 aa)) form the Fe2OG dioxygenase domain. Fe cation-binding residues include His96, Asp98, and His158. Arg168 serves as a coordination point for 2-oxoglutarate.

It depends on Fe(2+) as a cofactor. L-ascorbate serves as cofactor.

This Escherichia coli O17:K52:H18 (strain UMN026 / ExPEC) protein is PKHD-type hydroxylase YbiX.